The primary structure comprises 457 residues: Multidrug resistance protein MdtK (457 aa).

Transmembrane regions (helical) follow at residues 11 to 31 (LLAL…MGFV), 53 to 73 (IWLP…PVIA), 93 to 113 (WLAG…GYII), 127 to 147 (AVGY…FQVA), 160 to 180 (GMVM…IFIY), 189 to 209 (GGVG…FSMI), 243 to 263 (LPIA…ALLV), 276 to 296 (IALN…AAVT), 314 to 334 (AART…LFTV), 357 to 377 (LMLL…GSGI), 387 to 407 (IFFI…YILA), and 418 to 438 (PAGF…LMML).

Belongs to the multi antimicrobial extrusion (MATE) (TC 2.A.66.1) family. MdtK subfamily.

Its subcellular location is the cell inner membrane. Its function is as follows. Multidrug efflux pump that functions probably as a Na(+)/drug antiporter. This chain is Multidrug resistance protein MdtK, found in Enterobacter sp. (strain 638).